A 469-amino-acid chain; its full sequence is Arginine biosynthesis bifunctional protein ArgJ, mitochondrial (469 aa).

T199, K228, T239, E325, N464, and T469 together coordinate substrate. Residue T239 is the Nucleophile of the active site.

It belongs to the ArgJ family. Heterodimer of an alpha and a beta chain. In terms of processing, the alpha and beta chains are autoproteolytically processed from a single precursor protein within the mitochondrion.

It is found in the mitochondrion matrix. It carries out the reaction N(2)-acetyl-L-ornithine + L-glutamate = N-acetyl-L-glutamate + L-ornithine. The enzyme catalyses L-glutamate + acetyl-CoA = N-acetyl-L-glutamate + CoA + H(+). The protein operates within amino-acid biosynthesis; L-arginine biosynthesis; L-ornithine and N-acetyl-L-glutamate from L-glutamate and N(2)-acetyl-L-ornithine (cyclic): step 1/1. It functions in the pathway amino-acid biosynthesis; L-arginine biosynthesis; N(2)-acetyl-L-ornithine from L-glutamate: step 1/4. Functionally, catalyzes two activities which are involved in the cyclic version of arginine biosynthesis: the synthesis of acetylglutamate from glutamate and acetyl-CoA, and of ornithine by transacetylation between acetylornithine and glutamate. This Sordaria macrospora (strain ATCC MYA-333 / DSM 997 / K(L3346) / K-hell) protein is Arginine biosynthesis bifunctional protein ArgJ, mitochondrial.